The primary structure comprises 902 residues: Glycogen phosphorylase (902 aa).

Residues 1–21 form a disordered region; the sequence is MPPASTSTTNDMITEEPTSPH. Thr31 bears the Phosphothreonine mark. Ser333 is modified (phosphoserine). Lys751 carries the N6-(pyridoxal phosphate)lysine modification.

This sequence belongs to the glycogen phosphorylase family. As to quaternary structure, homodimer. Pyridoxal 5'-phosphate serves as cofactor.

The protein localises to the cytoplasm. It is found in the cytosol. It carries out the reaction [(1-&gt;4)-alpha-D-glucosyl](n) + phosphate = [(1-&gt;4)-alpha-D-glucosyl](n-1) + alpha-D-glucose 1-phosphate. Activated by phosphorylation of Thr-31. In terms of biological role, phosphorylase is an important allosteric enzyme in carbohydrate metabolism. Enzymes from different sources differ in their regulatory mechanisms and in their natural substrates. However, all known phosphorylases share catalytic and structural properties. The protein is Glycogen phosphorylase (GPH1) of Saccharomyces cerevisiae (strain ATCC 204508 / S288c) (Baker's yeast).